We begin with the raw amino-acid sequence, 261 residues long: Cytochrome c oxidase subunit 3 (261 aa).

At 1-15 (MAHQAHAYHMVDPSP) the chain is on the mitochondrial matrix side. A helical membrane pass occupies residues 16–34 (WPLTGAIAALLLTSGTAVW). Residues 35–40 (FHFHSL) lie on the Mitochondrial intermembrane side of the membrane. The chain crosses the membrane as a helical span at residues 41–66 (TLLTLGNILLLLTMYQWWRDIIREGT). Residues 67-72 (FQGHHT) lie on the Mitochondrial matrix side of the membrane. The chain crosses the membrane as a helical span at residues 73 to 105 (PPVQKGLRYGMILFITSEVFFFLGFFWAFYHAS). Residues 106-128 (LAPTPELGGCWPPAGITTLDPFE) are Mitochondrial intermembrane-facing. Residues 129 to 152 (VPLLNTAVLLASGVTVTWAHHSIM) form a helical membrane-spanning segment. Topologically, residues 153–155 (EGE) are mitochondrial matrix. A helical transmembrane segment spans residues 156 to 183 (RKQTIQALTLTILLGFYFTFLQGMEYYE). Residues 184–190 (APFTIAD) lie on the Mitochondrial intermembrane side of the membrane. The chain crosses the membrane as a helical span at residues 191–223 (GVYGSTFFVATGFHGLHVIIGSTFLAVCLLRQV). Over 224–232 (QYHFTSEHH) the chain is Mitochondrial matrix. The helical transmembrane segment at 233 to 256 (FGFEAAAWYWHFVDVVWLFLYVSI) threads the bilayer. The Mitochondrial intermembrane portion of the chain corresponds to 257-261 (YWWGS).

Belongs to the cytochrome c oxidase subunit 3 family. In terms of assembly, component of the cytochrome c oxidase (complex IV, CIV), a multisubunit enzyme composed of 14 subunits. The complex is composed of a catalytic core of 3 subunits MT-CO1, MT-CO2 and MT-CO3, encoded in the mitochondrial DNA, and 11 supernumerary subunits COX4I, COX5A, COX5B, COX6A, COX6B, COX6C, COX7A, COX7B, COX7C, COX8 and NDUFA4, which are encoded in the nuclear genome. The complex exists as a monomer or a dimer and forms supercomplexes (SCs) in the inner mitochondrial membrane with NADH-ubiquinone oxidoreductase (complex I, CI) and ubiquinol-cytochrome c oxidoreductase (cytochrome b-c1 complex, complex III, CIII), resulting in different assemblies (supercomplex SCI(1)III(2)IV(1) and megacomplex MCI(2)III(2)IV(2)).

Its subcellular location is the mitochondrion inner membrane. It carries out the reaction 4 Fe(II)-[cytochrome c] + O2 + 8 H(+)(in) = 4 Fe(III)-[cytochrome c] + 2 H2O + 4 H(+)(out). Functionally, component of the cytochrome c oxidase, the last enzyme in the mitochondrial electron transport chain which drives oxidative phosphorylation. The respiratory chain contains 3 multisubunit complexes succinate dehydrogenase (complex II, CII), ubiquinol-cytochrome c oxidoreductase (cytochrome b-c1 complex, complex III, CIII) and cytochrome c oxidase (complex IV, CIV), that cooperate to transfer electrons derived from NADH and succinate to molecular oxygen, creating an electrochemical gradient over the inner membrane that drives transmembrane transport and the ATP synthase. Cytochrome c oxidase is the component of the respiratory chain that catalyzes the reduction of oxygen to water. Electrons originating from reduced cytochrome c in the intermembrane space (IMS) are transferred via the dinuclear copper A center (CU(A)) of subunit 2 and heme A of subunit 1 to the active site in subunit 1, a binuclear center (BNC) formed by heme A3 and copper B (CU(B)). The BNC reduces molecular oxygen to 2 water molecules using 4 electrons from cytochrome c in the IMS and 4 protons from the mitochondrial matrix. This Oncorhynchus mykiss (Rainbow trout) protein is Cytochrome c oxidase subunit 3 (mt-co3).